We begin with the raw amino-acid sequence, 373 residues long: Class E vacuolar protein-sorting machinery protein hse1 (373 aa).

Residues 16–146 (ATDEKNTKEK…KIRKLDIVDL (131 aa)) enclose the VHS domain. In terms of domain architecture, UIM spans 164–183 (REEEELQYALALSLSESTAQ). 2 stretches are compositionally biased toward polar residues: residues 180–192 (STAQ…NPQS) and 199–213 (QKTN…ATSP). The tract at residues 180 to 213 (STAQSNKVENPQSTKDEPLQKTNQRQESNLATSP) is disordered. Residues 215–274 (STVSRVRALYDFAATEQGELSFKKGDIILVLESVYKDWWKGSCKNAVGIFPVNYVQRVVE) enclose the SH3 domain.

The protein belongs to the STAM family. Component of the ESCRT-0 complex composed of hse1 and sst4.

The protein resides in the endosome membrane. Component of the ESCRT-0 complex which is the sorting receptor for ubiquitinated cargo proteins at the multivesicular body (MVB). The chain is Class E vacuolar protein-sorting machinery protein hse1 (hse1) from Schizosaccharomyces pombe (strain 972 / ATCC 24843) (Fission yeast).